A 223-amino-acid chain; its full sequence is Phosphoribosylformylglycinamidine synthase subunit PurQ (223 aa).

Positions 3 to 223 (FAVLVFPGSN…MVKSWREQHV (221 aa)) constitute a Glutamine amidotransferase type-1 domain. The active-site Nucleophile is the Cys-85. Catalysis depends on residues His-193 and Glu-195.

Part of the FGAM synthase complex composed of 1 PurL, 1 PurQ and 2 PurS subunits.

It is found in the cytoplasm. It carries out the reaction N(2)-formyl-N(1)-(5-phospho-beta-D-ribosyl)glycinamide + L-glutamine + ATP + H2O = 2-formamido-N(1)-(5-O-phospho-beta-D-ribosyl)acetamidine + L-glutamate + ADP + phosphate + H(+). The catalysed reaction is L-glutamine + H2O = L-glutamate + NH4(+). The protein operates within purine metabolism; IMP biosynthesis via de novo pathway; 5-amino-1-(5-phospho-D-ribosyl)imidazole from N(2)-formyl-N(1)-(5-phospho-D-ribosyl)glycinamide: step 1/2. In terms of biological role, part of the phosphoribosylformylglycinamidine synthase complex involved in the purines biosynthetic pathway. Catalyzes the ATP-dependent conversion of formylglycinamide ribonucleotide (FGAR) and glutamine to yield formylglycinamidine ribonucleotide (FGAM) and glutamate. The FGAM synthase complex is composed of three subunits. PurQ produces an ammonia molecule by converting glutamine to glutamate. PurL transfers the ammonia molecule to FGAR to form FGAM in an ATP-dependent manner. PurS interacts with PurQ and PurL and is thought to assist in the transfer of the ammonia molecule from PurQ to PurL. This Staphylococcus aureus (strain MSSA476) protein is Phosphoribosylformylglycinamidine synthase subunit PurQ.